We begin with the raw amino-acid sequence, 164 residues long: ATP synthase subunit b 1 (164 aa).

The chain crosses the membrane as a helical span at residues 8-28; sequence PETWVAIAFVILMGLFAYLGV.

The protein belongs to the ATPase B chain family. As to quaternary structure, F-type ATPases have 2 components, F(1) - the catalytic core - and F(0) - the membrane proton channel. F(1) has five subunits: alpha(3), beta(3), gamma(1), delta(1), epsilon(1). F(0) has three main subunits: a(1), b(2) and c(10-14). The alpha and beta chains form an alternating ring which encloses part of the gamma chain. F(1) is attached to F(0) by a central stalk formed by the gamma and epsilon chains, while a peripheral stalk is formed by the delta and b chains.

The protein localises to the cell inner membrane. Functionally, f(1)F(0) ATP synthase produces ATP from ADP in the presence of a proton or sodium gradient. F-type ATPases consist of two structural domains, F(1) containing the extramembraneous catalytic core and F(0) containing the membrane proton channel, linked together by a central stalk and a peripheral stalk. During catalysis, ATP synthesis in the catalytic domain of F(1) is coupled via a rotary mechanism of the central stalk subunits to proton translocation. In terms of biological role, component of the F(0) channel, it forms part of the peripheral stalk, linking F(1) to F(0). The polypeptide is ATP synthase subunit b 1 (Bradyrhizobium sp. (strain ORS 278)).